A 579-amino-acid chain; its full sequence is 2-isopropylmalate synthase (579 aa).

One can recognise a Pyruvate carboxyltransferase domain in the interval 40 to 314 (PRWCAVDLRD…DPMIDFSDID (275 aa)). Residues Asp49, His253, His255, and Asn289 each contribute to the Mg(2+) site. The segment at 456–579 (SSKEDGQWGR…VNRAIRDAQA (124 aa)) is regulatory domain.

The protein belongs to the alpha-IPM synthase/homocitrate synthase family. LeuA type 2 subfamily. In terms of assembly, homodimer. Requires Mg(2+) as cofactor.

It is found in the cytoplasm. It catalyses the reaction 3-methyl-2-oxobutanoate + acetyl-CoA + H2O = (2S)-2-isopropylmalate + CoA + H(+). The protein operates within amino-acid biosynthesis; L-leucine biosynthesis; L-leucine from 3-methyl-2-oxobutanoate: step 1/4. Catalyzes the condensation of the acetyl group of acetyl-CoA with 3-methyl-2-oxobutanoate (2-ketoisovalerate) to form 3-carboxy-3-hydroxy-4-methylpentanoate (2-isopropylmalate). In Arthrobacter sp. (strain FB24), this protein is 2-isopropylmalate synthase.